Reading from the N-terminus, the 631-residue chain is Phosphomethylpyrimidine synthase (631 aa).

Residues Asn239, Met268, Tyr297, His333, Ser353–Gly355, Asp394–Arg397, and Glu433 each bind substrate. Residue His437 participates in Zn(2+) binding. Tyr460 lines the substrate pocket. His501 contacts Zn(2+). Residues Cys581, Cys584, and Cys589 each contribute to the [4Fe-4S] cluster site.

It belongs to the ThiC family. In terms of assembly, homodimer. [4Fe-4S] cluster is required as a cofactor.

The catalysed reaction is 5-amino-1-(5-phospho-beta-D-ribosyl)imidazole + S-adenosyl-L-methionine = 4-amino-2-methyl-5-(phosphooxymethyl)pyrimidine + CO + 5'-deoxyadenosine + formate + L-methionine + 3 H(+). The protein operates within cofactor biosynthesis; thiamine diphosphate biosynthesis. Its function is as follows. Catalyzes the synthesis of the hydroxymethylpyrimidine phosphate (HMP-P) moiety of thiamine from aminoimidazole ribotide (AIR) in a radical S-adenosyl-L-methionine (SAM)-dependent reaction. In Salmonella agona (strain SL483), this protein is Phosphomethylpyrimidine synthase.